A 173-amino-acid polypeptide reads, in one-letter code: T-complex protein 1 subunit alpha (173 aa).

Belongs to the TCP-1 chaperonin family. Component of the chaperonin-containing T-complex (TRiC), a heterooligomeric complex of about 850 to 900 kDa that forms two stacked rings, 12 to 16 nm in diameter.

Its subcellular location is the cytoplasm. It localises to the cytosol. Component of the chaperonin-containing T-complex (TRiC), a molecular chaperone complex that assists the folding of proteins upon ATP hydrolysis. The chain is T-complex protein 1 subunit alpha from Ambystoma mexicanum (Axolotl).